A 527-amino-acid polypeptide reads, in one-letter code: Plant-specific TFIIB-related protein PTF2 (527 aa).

The TFIIB-type zinc-finger motif lies at 1–30 (MRCKRCNGSNFERDEDTGNSYCGGCGTLRE).

In terms of assembly, can form homodimer. Interacts with TBP2. In terms of tissue distribution, expressed in shoot apical meristems, root tips, primordia of lateral roots, inflorescences, developing pollen grains and embryos.

The protein resides in the nucleus. Plant-specific TFIIB-related protein that plays important roles in pollen germination and embryogenesis, possibly by regulating gene expression through interaction with TBP2 and the subunits of RNA polymerases. Binds double-stranded DNA in vitro. This is Plant-specific TFIIB-related protein PTF2 from Arabidopsis thaliana (Mouse-ear cress).